We begin with the raw amino-acid sequence, 149 residues long: Nucleoside diphosphate kinase (149 aa).

The ATP site is built by Lys9, Phe57, Arg85, Thr91, Arg102, and Asn112. His115 acts as the Pros-phosphohistidine intermediate in catalysis.

This sequence belongs to the NDK family. Homotetramer. Requires Mg(2+) as cofactor.

The protein localises to the cytoplasm. It catalyses the reaction dZDP + ATP = dZTP + ADP. The catalysed reaction is a 2'-deoxyribonucleoside 5'-diphosphate + ATP = a 2'-deoxyribonucleoside 5'-triphosphate + ADP. It carries out the reaction a ribonucleoside 5'-diphosphate + ATP = a ribonucleoside 5'-triphosphate + ADP. Its pathway is purine metabolism. Functionally, major role in the synthesis of nucleoside triphosphates other than ATP. The ATP gamma phosphate is transferred to the NDP beta phosphate via a ping-pong mechanism, using a phosphorylated active-site intermediate. Its function is as follows. (Microbial infection) Catalyzes the phosphorylation of dZDP to dZTP, when the bacterium is infected by a phage that produces the substrate for the synthesis of dZTP (2- amino-2'-deoxyadenosine 5'-triphosphate), which is then used by the phage as a DNA polymerase substrate. The chain is Nucleoside diphosphate kinase from Picosynechococcus sp. (strain ATCC 27264 / PCC 7002 / PR-6) (Agmenellum quadruplicatum).